Consider the following 70-residue polypeptide: Large ribosomal subunit protein eL38 (70 aa).

Belongs to the eukaryotic ribosomal protein eL38 family.

The protein is Large ribosomal subunit protein eL38 (RpL38) of Timarcha balearica.